A 996-amino-acid polypeptide reads, in one-letter code: PDZ domain-containing protein C23G3.12c (996 aa).

A disordered region spans residues 1–35 (MSIKKRARAGSKSDDIGNKTPKKNGIEHEATKSSE). PDZ domains lie at 280 to 358 (SRLG…QRGS), 745 to 827 (EFRA…LREG), and 860 to 930 (RAVR…STFD). The tract at residues 972–996 (KNPSMGFTIDEEVDDNTFDTEGEQQ) is disordered. Residues 980–996 (IDEEVDDNTFDTEGEQQ) show a composition bias toward acidic residues.

This sequence belongs to the peptidase S1C family.

This is PDZ domain-containing protein C23G3.12c from Schizosaccharomyces pombe (strain 972 / ATCC 24843) (Fission yeast).